The chain runs to 306 residues: Serine/threonine-protein kinase mug51 (306 aa).

The protein belongs to the STK19 family.

It carries out the reaction L-seryl-[protein] + ATP = O-phospho-L-seryl-[protein] + ADP + H(+). The enzyme catalyses L-threonyl-[protein] + ATP = O-phospho-L-threonyl-[protein] + ADP + H(+). Serine/threonine-protein kinase. Has a role in meiosis. The sequence is that of Serine/threonine-protein kinase mug51 (mug51) from Schizosaccharomyces pombe (strain 972 / ATCC 24843) (Fission yeast).